The sequence spans 355 residues: Zinc finger protein CONSTANS-LIKE 5 (355 aa).

Zn(2+) contacts are provided by C22, C25, C45, H50, C61, C64, C84, and H89. Residues 22 to 60 form a B box-type 1; atypical zinc finger; that stretch reads CDACKSVTAAVFCRVDSAFLCIACDTRIHSFTRHERVWV. The B box-type 2; atypical zinc finger occupies 61–103; it reads CEVCEQAPAAVTCKADAAALCVSCDADIHSANPLASRHERVPV. The CCT domain maps to 285-327; sequence REARVLRYREKRKNRKFEKTIRYASRKAYAESRPRIKGRFAKR.

The protein belongs to the CONSTANS family.

Its subcellular location is the nucleus. The protein is Zinc finger protein CONSTANS-LIKE 5 (COL5) of Arabidopsis thaliana (Mouse-ear cress).